We begin with the raw amino-acid sequence, 193 residues long: Interleukin-23 subunit alpha (193 aa).

The N-terminal stretch at 1 to 22 is a signal peptide; sequence MLGSRAVMLMLLLLLLPWTSQG.

The protein belongs to the IL-6 superfamily. As to quaternary structure, heterodimer with IL12B; disulfide-linked. The heterodimer is known as interleukin IL-23. Interacts with IL23R; this interaction enables recruitment of IL12RB1.

It localises to the secreted. Associates with IL12B to form the pro-inflammatory cytokine IL-23 that plays different roles in innate and adaptive immunity. Released by antigen-presenting cells such as dendritic cells or macrophages, binds to a heterodimeric receptor complex composed of IL12RB1 and IL23R to activate JAK2 and TYK2 which then phosphorylate the receptor to form a docking site leading to the phosphorylation of STAT3 and STAT4. This process leads to activation of several pathways including p38 MAPK or NF-kappa-B and promotes the production of pro-inflammatory cytokines such as interleukin-17A/IL17A. In turn, participates in the early and effective intracellular bacterial clearance. Promotes the expansion and survival of T-helper 17 cells, a CD4-positive helper T-cell subset that produces IL-17, as well as other IL-17-producing cells. The polypeptide is Interleukin-23 subunit alpha (IL23A) (Sus scrofa (Pig)).